Consider the following 118-residue polypeptide: Large ribosomal subunit protein uL24 (118 aa).

The protein belongs to the universal ribosomal protein uL24 family. Part of the 50S ribosomal subunit.

Functionally, one of two assembly initiator proteins, it binds directly to the 5'-end of the 23S rRNA, where it nucleates assembly of the 50S subunit. Its function is as follows. One of the proteins that surrounds the polypeptide exit tunnel on the outside of the subunit. This Parasynechococcus marenigrum (strain WH8102) protein is Large ribosomal subunit protein uL24.